The sequence spans 156 residues: Probable cyclic pyranopterin monophosphate synthase (156 aa).

Substrate contacts are provided by residues 74 to 76 (LCH) and 110 to 111 (ME). Asp125 is an active-site residue.

The protein belongs to the MoaC family. Homohexamer; trimer of dimers.

The enzyme catalyses (8S)-3',8-cyclo-7,8-dihydroguanosine 5'-triphosphate = cyclic pyranopterin phosphate + diphosphate. It participates in cofactor biosynthesis; molybdopterin biosynthesis. Functionally, catalyzes the conversion of (8S)-3',8-cyclo-7,8-dihydroguanosine 5'-triphosphate to cyclic pyranopterin monophosphate (cPMP). The chain is Probable cyclic pyranopterin monophosphate synthase from Thermococcus onnurineus (strain NA1).